A 514-amino-acid chain; its full sequence is MRHHTKNLRRRAIFLRTTPRGNMDSSSSVATSTSSSSNHRLVRSSEGSPSAGGDDIEEVIMTPGIATGRVQPAVSVAIPDLFTQLPPVKDDLATSTSKTQDETVAICLPYLAGSDANADVEHNAHGVPHIDRKKHVRFLRNMLRQLPAPFIAADASRPWFLYWSLNAMAILGENVKEDYAESLADTARSMQNESGGFSGGHGQTSHLATTYAVVLALAVVGDEEGLSLIDRRALWKWLCDLKEADGGFRMSLGGEEDVRGAYCAAVIISLLNLPLDLCKDSEAYIRDPTANLFTGLGDYVRKCQTFEGGISGQPDAEAHGAYAFCALGCLSLLGTPSETIPKYLNIERLISWLSSRQYAPEGGFSGRTNKLVDGCYSHWVGGCWPLIEACLNGPVKVSSLDVEPQPLFSREGLMRYILCCCQEQGKRGGLRDKPGKPSDAYHSCYVLSGLSSAQNRWQLVVGDDDMPAWMVSPFPNEEEIFDEKDRVGTVHPVYVIPEDKVAKVQTFFASRDGF.

Positions 1 to 13 (MRHHTKNLRRRAI) are enriched in basic residues. The disordered stretch occupies residues 1–56 (MRHHTKNLRRRAIFLRTTPRGNMDSSSSVATSTSSSSNHRLVRSSEGSPSAGGDDI). Positions 25–39 (SSSSVATSTSSSSNH) are enriched in low complexity. PFTB repeat units lie at residues 180–221 (AESL…AVVG), 231–272 (RRAL…SLLN), 293–334 (FTGL…SLLG), 346–388 (IERL…PLIE), and 410–454 (REGL…SSAQ). Residues 319–322 (HGAY) and 367–370 (RTNK) contribute to the (2E,6E)-farnesyl diphosphate site. 2 residues coordinate Zn(2+): Asp373 and Cys375. Residue 376–379 (YSHW) participates in (2E,6E)-farnesyl diphosphate binding. His442 serves as a coordination point for Zn(2+).

This sequence belongs to the protein prenyltransferase subunit beta family. Heterodimer of an alpha and a beta subunit. Interacts with RAS1 and RAS2. The cofactor is Zn(2+). In terms of tissue distribution, highly expressed in mycelium, conidium, conidial germination, early formed appressorium and the late infection hypha.

It is found in the cytoplasm. It catalyses the reaction L-cysteinyl-[protein] + (2E,6E)-farnesyl diphosphate = S-(2E,6E)-farnesyl-L-cysteinyl-[protein] + diphosphate. Functionally, catalyzes the transfer of a farnesyl moiety from farnesyl diphosphate to a cysteine at the fourth position from the C-terminus of several proteins having the C-terminal sequence Cys-aliphatic-aliphatic-X. The beta subunit is responsible for peptide-binding. This is Protein farnesyltransferase subunit beta (RAM1) from Pyricularia oryzae (strain 70-15 / ATCC MYA-4617 / FGSC 8958) (Rice blast fungus).